The following is a 258-amino-acid chain: Imidazole glycerol phosphate synthase subunit HisF (258 aa).

Catalysis depends on residues Asp11 and Asp130.

It belongs to the HisA/HisF family. As to quaternary structure, heterodimer of HisH and HisF.

Its subcellular location is the cytoplasm. The enzyme catalyses 5-[(5-phospho-1-deoxy-D-ribulos-1-ylimino)methylamino]-1-(5-phospho-beta-D-ribosyl)imidazole-4-carboxamide + L-glutamine = D-erythro-1-(imidazol-4-yl)glycerol 3-phosphate + 5-amino-1-(5-phospho-beta-D-ribosyl)imidazole-4-carboxamide + L-glutamate + H(+). It participates in amino-acid biosynthesis; L-histidine biosynthesis; L-histidine from 5-phospho-alpha-D-ribose 1-diphosphate: step 5/9. Functionally, IGPS catalyzes the conversion of PRFAR and glutamine to IGP, AICAR and glutamate. The HisF subunit catalyzes the cyclization activity that produces IGP and AICAR from PRFAR using the ammonia provided by the HisH subunit. The sequence is that of Imidazole glycerol phosphate synthase subunit HisF from Xanthomonas campestris pv. campestris (strain B100).